The primary structure comprises 469 residues: Putative dipeptidase SSP1012 (469 aa).

H84 serves as a coordination point for Zn(2+). The active site involves D86. D115 is a binding site for Zn(2+). E149 functions as the Proton acceptor in the catalytic mechanism. E150, D173, and H440 together coordinate Zn(2+).

It belongs to the peptidase M20A family. The cofactor is Zn(2+).

The protein is Putative dipeptidase SSP1012 of Staphylococcus saprophyticus subsp. saprophyticus (strain ATCC 15305 / DSM 20229 / NCIMB 8711 / NCTC 7292 / S-41).